Here is a 494-residue protein sequence, read N- to C-terminus: Aspartyl/glutamyl-tRNA(Asn/Gln) amidotransferase subunit B (494 aa).

Residues 475 to 494 (TSGRADPKATNQMLAKKLKG) form a disordered region.

This sequence belongs to the GatB/GatE family. GatB subfamily. As to quaternary structure, heterotrimer of A, B and C subunits.

The enzyme catalyses L-glutamyl-tRNA(Gln) + L-glutamine + ATP + H2O = L-glutaminyl-tRNA(Gln) + L-glutamate + ADP + phosphate + H(+). It carries out the reaction L-aspartyl-tRNA(Asn) + L-glutamine + ATP + H2O = L-asparaginyl-tRNA(Asn) + L-glutamate + ADP + phosphate + 2 H(+). In terms of biological role, allows the formation of correctly charged Asn-tRNA(Asn) or Gln-tRNA(Gln) through the transamidation of misacylated Asp-tRNA(Asn) or Glu-tRNA(Gln) in organisms which lack either or both of asparaginyl-tRNA or glutaminyl-tRNA synthetases. The reaction takes place in the presence of glutamine and ATP through an activated phospho-Asp-tRNA(Asn) or phospho-Glu-tRNA(Gln). In Acaryochloris marina (strain MBIC 11017), this protein is Aspartyl/glutamyl-tRNA(Asn/Gln) amidotransferase subunit B.